Here is a 158-residue protein sequence, read N- to C-terminus: Small t antigen (158 aa).

M1 is modified (N-acetylmethionine; by host). The J domain maps to 12–75 (RLMHLLKLPM…LPCLSTQDFI (64 aa)). Residues 95–106 (CNFENCNKCLYC) form a C4-type; atypical zinc finger. Residues 112–130 (HKSDPPFPKVWGYCLCYKC) form an H1C3-type; atypical zinc finger.

Interacts with host PPP2R1A; the interaction inhibits PP2A activity.

The protein resides in the host cytoplasm. It localises to the host nucleus. Functionally, promotes efficient viral genome replication by accelerating both G1 and S phase progression of the cell cycle. Inhibits host PP2A by binding to the A subunit, thereby displacing lower affinity regulatory B subunit. Inactivation of PP2A in turn results in the transactivation of cyclin A and cyclin D1 promoters. Late during the infection cycle, ST may induce dephosphorylation of host MTOR, leading to the inhibition of cap-dependent translation. May establish and maintain high levels of viral genomes during persistent infection in cell culture. This Mus musculus (Mouse) protein is Small t antigen.